The chain runs to 476 residues: MTPGYPLALSLAVSMAVLGSALPAQARQDDPSLFNRQARGELSEYGGARRVEQDLTQALKQSLSKKKAKNVILLIGDGMGDSEITVARNYARGAGGYFKGIDALPLTGQYTHYSLHKDSGLPDYVTDSAASATAWTTGVKSYNGAIGVDIHEQPHRNLLELAKLNGKATGNVSTAELQDATPAALLAHVTARKCYGPEATSKQCPSNALENGGAGSITEQWLKTRPDVVLGGGAATFAETAKAGRYAGKTLRAQAEARGYRIVENLDELKAVRRANQKQPLIGLFAPGNMPVRWLGPTATYHGNLNQPAVSCEANPKRTADIPTLAQMTSKAIELLKDNPNGFFLQVEGASIDKQDHAANPCGQIGETVDLDEAVQKALAFAKADGETLVIVTADHAHSSQIIPPETAAPGLTQLLTTKDGAPLAISYGNSEEGSQEHTGTQLRIAAYGPQAANVTGLTDQTDLFFTIRRALNLRD.

An N-terminal signal peptide occupies residues 1–26; that stretch reads MTPGYPLALSLAVSMAVLGSALPAQA. Aspartate 77 contacts Mg(2+). Residue aspartate 77 participates in Zn(2+) binding. The active-site Phosphoserine intermediate is the serine 128. Serine 128 is subject to Phosphoserine. Mg(2+) contacts are provided by aspartate 179 and threonine 181. At serine 206 the chain carries Phosphoserine. Position 346 (glutamine 346) interacts with Mg(2+). The Zn(2+) site is built by aspartate 353, histidine 357, aspartate 395, histidine 396, and histidine 438.

It belongs to the alkaline phosphatase family. It depends on Mg(2+) as a cofactor. Zn(2+) serves as cofactor.

It is found in the secreted. Its subcellular location is the periplasm. The catalysed reaction is a phosphate monoester + H2O = an alcohol + phosphate. Its function is as follows. Has only phosphomonoesterase activity. This is Alkaline phosphatase H (phoA) from Pseudomonas aeruginosa (strain UCBPP-PA14).